Here is a 181-residue protein sequence, read N- to C-terminus: MAQDSNNLIWIDMEMTGLNPNTDCIIEIALVVTDAQLNTVAEAPVLVISQPDSVLNGMDKWNQSTHGKSGLIDKVKASTLSEAEAEARMLAFLAPYVPADISPMCGNSICQDRRFLARCMPQLEAYFHYRNLDVSTLKELAKRWKPEVAQGFNKQGKHEALADIYDSIEELKHYRQHLFNI.

In terms of domain architecture, Exonuclease spans 8-171 (LIWIDMEMTG…ADIYDSIEEL (164 aa)). Residue Y129 is part of the active site.

This sequence belongs to the oligoribonuclease family.

The protein localises to the cytoplasm. Its function is as follows. 3'-to-5' exoribonuclease specific for small oligoribonucleotides. The sequence is that of Oligoribonuclease from Nitrosomonas eutropha (strain DSM 101675 / C91 / Nm57).